The primary structure comprises 101 residues: MSHNHDHNHDHEVISLVDEQGNETLFEILLTIDGREEFGKNYVLLVPAGAEEDADGEIEIQAYSFTENEDGTEGDLQPIPEDSDAEWDMIEEVFNSFIDEN.

This sequence belongs to the UPF0473 family.

This Streptococcus thermophilus (strain CNRZ 1066) protein is UPF0473 protein str1961.